The primary structure comprises 603 residues: Elongation factor 4 (603 aa).

Residues 2 to 184 enclose the tr-type G domain; it reads NHIRNFSIIA…AVVARMPPPR (183 aa). Residues 14-19 and 131-134 each bind GTP; these read DHGKST and NKMD.

The protein belongs to the TRAFAC class translation factor GTPase superfamily. Classic translation factor GTPase family. LepA subfamily.

The protein localises to the cell inner membrane. The enzyme catalyses GTP + H2O = GDP + phosphate + H(+). In terms of biological role, required for accurate and efficient protein synthesis under certain stress conditions. May act as a fidelity factor of the translation reaction, by catalyzing a one-codon backward translocation of tRNAs on improperly translocated ribosomes. Back-translocation proceeds from a post-translocation (POST) complex to a pre-translocation (PRE) complex, thus giving elongation factor G a second chance to translocate the tRNAs correctly. Binds to ribosomes in a GTP-dependent manner. In Albidiferax ferrireducens (strain ATCC BAA-621 / DSM 15236 / T118) (Rhodoferax ferrireducens), this protein is Elongation factor 4.